Consider the following 360-residue polypeptide: Mitogen-activated protein kinase 14 (360 aa).

Ser2 carries the post-translational modification N-acetylserine. Ser2 carries the post-translational modification Phosphoserine. Residue Thr16 is modified to Phosphothreonine. Residues 24 to 308 (YQNLSPVGSG…AAQALAHAYF (285 aa)) enclose the Protein kinase domain. ATP-binding positions include 30 to 38 (VGSGAYGSV) and Lys53. Lys53 carries the post-translational modification N6-acetyllysine. The active-site Proton acceptor is Asp150. Lys152 carries the post-translational modification N6-acetyllysine. Thr180 is subject to Phosphothreonine; by MAP2K3, MAP2K4, MAP2K6 and autocatalysis. Positions 180–182 (TGY) match the TXY motif. At Tyr182 the chain carries Phosphotyrosine; by MAP2K3, MAP2K4, MAP2K6 and autocatalysis. The residue at position 263 (Thr263) is a Phosphothreonine. A Phosphotyrosine; by ZAP70 modification is found at Tyr323.

Belongs to the protein kinase superfamily. CMGC Ser/Thr protein kinase family. MAP kinase subfamily. Component of a signaling complex containing at least AKAP13, PKN1, MAPK14, ZAK and MAP2K3. Within this complex, AKAP13 interacts directly with PKN1, which in turn recruits MAPK14, MAP2K3 and ZAK. Binds to a kinase interaction motif within the protein tyrosine phosphatase, PTPRR. This interaction retains MAPK14 in the cytoplasm and prevents nuclear accumulation. Interacts with SPAG9 and GADD45A. Interacts with CDC25B, CDC25C, DUSP1, DUSP10, DUSP16, NP60, SUPT20H and TAB1. Interacts with casein kinase II subunits CSNK2A1 and CSNK2B. Interacts with PPM1D. Interacts with CDK5RAP3; recruits PPM1D to MAPK14 and may regulate its dephosphorylation. Interacts with DUSP2; this interaction does not lead to catalytic activation of DUSP2 and dephosphrylation of MAPK14. Mg(2+) is required as a cofactor. In terms of processing, dually phosphorylated on Thr-180 and Tyr-182 by the MAP2Ks MAP2K3/MKK3, MAP2K4/MKK4 and MAP2K6/MKK6 in response to inflammatory citokines, environmental stress or growth factors, which activates the enzyme. Dual phosphorylation can also be mediated by TAB1-mediated autophosphorylation. TCR engagement in T-cells also leads to Tyr-323 phosphorylation by ZAP70. Dephosphorylated and inactivated by DUPS1, DUSP10 and DUSP16. PPM1D also mediates dephosphorylation and inactivation of MAPK14. Post-translationally, acetylated at Lys-53 and Lys-152 by KAT2B and EP300. Acetylation at Lys-53 increases the affinity for ATP and enhances kinase activity. Lys-53 and Lys-152 are deacetylated by HDAC3. Ubiquitinated. Ubiquitination leads to degradation by the proteasome pathway.

The protein localises to the cytoplasm. It is found in the nucleus. It catalyses the reaction L-seryl-[protein] + ATP = O-phospho-L-seryl-[protein] + ADP + H(+). The catalysed reaction is L-threonyl-[protein] + ATP = O-phospho-L-threonyl-[protein] + ADP + H(+). With respect to regulation, activated by cell stresses such as DNA damage, heat shock, osmotic shock, anisomycin and sodium arsenite, as well as pro-inflammatory stimuli such as bacterial lipopolysaccharide (LPS) and interleukin-1. Activation occurs through dual phosphorylation of Thr-180 and Tyr-182 by either of two dual specificity kinases, MAP2K3/MKK3 or MAP2K6/MKK6, and potentially also MAP2K4/MKK4, as well as by TAB1-mediated autophosphorylation. MAPK14 phosphorylated on both Thr-180 and Tyr-182 is 10-20-fold more active than MAPK14 phosphorylated only on Thr-180, whereas MAPK14 phosphorylated on Tyr-182 alone is inactive. whereas Thr-180 is necessary for catalysis, Tyr-182 may be required for auto-activation and substrate recognition. Phosphorylated at Tyr-323 by ZAP70 in an alternative activation pathway in response to TCR signaling in T-cells. This alternative pathway is inhibited by GADD45A. Inhibited by dual specificity phosphatases, such as DUSP1, DUSP10, and DUSP16. Specifically inhibited by the binding of pyridinyl-imidazole compounds, which are cytokine-suppressive anti-inflammatory drugs (CSAID). SB203580 is an inhibitor of MAPK14. In terms of biological role, serine/threonine kinase which acts as an essential component of the MAP kinase signal transduction pathway. MAPK14 is one of the four p38 MAPKs which play an important role in the cascades of cellular responses evoked by extracellular stimuli such as pro-inflammatory cytokines or physical stress leading to direct activation of transcription factors. Accordingly, p38 MAPKs phosphorylate a broad range of proteins and it has been estimated that they may have approximately 200 to 300 substrates each. Some of the targets are downstream kinases which are activated through phosphorylation and further phosphorylate additional targets. RPS6KA5/MSK1 and RPS6KA4/MSK2 can directly phosphorylate and activate transcription factors such as CREB1, ATF1, the NF-kappa-B isoform RELA/NFKB3, STAT1 and STAT3, but can also phosphorylate histone H3 and the nucleosomal protein HMGN1. RPS6KA5/MSK1 and RPS6KA4/MSK2 play important roles in the rapid induction of immediate-early genes in response to stress or mitogenic stimuli, either by inducing chromatin remodeling or by recruiting the transcription machinery. On the other hand, two other kinase targets, MAPKAPK2/MK2 and MAPKAPK3/MK3, participate in the control of gene expression mostly at the post-transcriptional level, by phosphorylating ZFP36 (tristetraprolin) and ELAVL1, and by regulating EEF2K, which is important for the elongation of mRNA during translation. MKNK1/MNK1 and MKNK2/MNK2, two other kinases activated by p38 MAPKs, regulate protein synthesis by phosphorylating the initiation factor EIF4E2. MAPK14 also interacts with casein kinase II, leading to its activation through autophosphorylation and further phosphorylation of TP53/p53. In the cytoplasm, the p38 MAPK pathway is an important regulator of protein turnover. For example, CFLAR is an inhibitor of TNF-induced apoptosis whose proteasome-mediated degradation is regulated by p38 MAPK phosphorylation. In a similar way, MAPK14 phosphorylates the ubiquitin ligase SIAH2, regulating its activity towards EGLN3. MAPK14 may also inhibit the lysosomal degradation pathway of autophagy by interfering with the intracellular trafficking of the transmembrane protein ATG9. Another function of MAPK14 is to regulate the endocytosis of membrane receptors by different mechanisms that impinge on the small GTPase RAB5A. In addition, clathrin-mediated EGFR internalization induced by inflammatory cytokines and UV irradiation depends on MAPK14-mediated phosphorylation of EGFR itself as well as of RAB5A effectors. Ectodomain shedding of transmembrane proteins is regulated by p38 MAPKs as well. In response to inflammatory stimuli, p38 MAPKs phosphorylate the membrane-associated metalloprotease ADAM17. Such phosphorylation is required for ADAM17-mediated ectodomain shedding of TGF-alpha family ligands, which results in the activation of EGFR signaling and cell proliferation. Another p38 MAPK substrate is FGFR1. FGFR1 can be translocated from the extracellular space into the cytosol and nucleus of target cells, and regulates processes such as rRNA synthesis and cell growth. FGFR1 translocation requires p38 MAPK activation. In the nucleus, many transcription factors are phosphorylated and activated by p38 MAPKs in response to different stimuli. Classical examples include ATF1, ATF2, ATF6, ELK1, PTPRH, DDIT3, TP53/p53 and MEF2C and MEF2A. The p38 MAPKs are emerging as important modulators of gene expression by regulating chromatin modifiers and remodelers. The promoters of several genes involved in the inflammatory response, such as IL6, IL8 and IL12B, display a p38 MAPK-dependent enrichment of histone H3 phosphorylation on 'Ser-10' (H3S10ph) in LPS-stimulated myeloid cells. This phosphorylation enhances the accessibility of the cryptic NF-kappa-B-binding sites marking promoters for increased NF-kappa-B recruitment. Phosphorylates CDC25B and CDC25C which is required for binding to 14-3-3 proteins and leads to initiation of a G2 delay after ultraviolet radiation. Phosphorylates TIAR following DNA damage, releasing TIAR from GADD45A mRNA and preventing mRNA degradation. The p38 MAPKs may also have kinase-independent roles, which are thought to be due to the binding to targets in the absence of phosphorylation. Protein O-Glc-N-acylation catalyzed by the OGT is regulated by MAPK14, and, although OGT does not seem to be phosphorylated by MAPK14, their interaction increases upon MAPK14 activation induced by glucose deprivation. This interaction may regulate OGT activity by recruiting it to specific targets such as neurofilament H, stimulating its O-Glc-N-acylation. Required in mid-fetal development for the growth of embryo-derived blood vessels in the labyrinth layer of the placenta. Also plays an essential role in developmental and stress-induced erythropoiesis, through regulation of EPO gene expression. Phosphorylates S100A9 at 'Thr-113'. The protein is Mitogen-activated protein kinase 14 of Canis lupus familiaris (Dog).